We begin with the raw amino-acid sequence, 285 residues long: Urease accessory protein UreD (285 aa).

The protein belongs to the UreD family. As to quaternary structure, ureD, UreF and UreG form a complex that acts as a GTP-hydrolysis-dependent molecular chaperone, activating the urease apoprotein by helping to assemble the nickel containing metallocenter of UreC. The UreE protein probably delivers the nickel.

Its subcellular location is the cytoplasm. Its function is as follows. Required for maturation of urease via the functional incorporation of the urease nickel metallocenter. In Methylobacillus flagellatus (strain ATCC 51484 / DSM 6875 / VKM B-1610 / KT), this protein is Urease accessory protein UreD.